The primary structure comprises 883 residues: Translation initiation factor IF-2 (883 aa).

The span at 32 to 45 (NDLNGKNNSNSSIN) shows a compositional bias: polar residues. Disordered regions lie at residues 32-216 (NDLN…QNKY) and 251-275 (RKLG…AETE). Positions 46-62 (LDKHNNKVEYSQNRDNR) are enriched in basic and acidic residues. The span at 75-216 (GGYSQNRDNR…VGKNTSQNKY (142 aa)) shows a compositional bias: polar residues. Residues 251–260 (RKLGEKKKQQ) are compositionally biased toward basic and acidic residues. The region spanning 381–554 (EKPPVITIMG…DMMLLKANPS (174 aa)) is the tr-type G domain. Residues 390–397 (GHVDHGKT) form a G1 region. Residue 390-397 (GHVDHGKT) coordinates GTP. The interval 415–419 (GITQH) is G2. The tract at residues 436–439 (DTPG) is G3. Residues 436 to 440 (DTPGH) and 490 to 493 (NKID) each bind GTP. The tract at residues 490–493 (NKID) is G4. Positions 526 to 528 (SAL) are G5.

The protein belongs to the TRAFAC class translation factor GTPase superfamily. Classic translation factor GTPase family. IF-2 subfamily.

It localises to the cytoplasm. One of the essential components for the initiation of protein synthesis. Protects formylmethionyl-tRNA from spontaneous hydrolysis and promotes its binding to the 30S ribosomal subunits. Also involved in the hydrolysis of GTP during the formation of the 70S ribosomal complex. In Borrelia garinii subsp. bavariensis (strain ATCC BAA-2496 / DSM 23469 / PBi) (Borreliella bavariensis), this protein is Translation initiation factor IF-2.